The chain runs to 196 residues: NADH dehydrogenase [ubiquinone] 1 alpha subcomplex assembly factor 3 (196 aa).

Residues 1-93 (MIARTLRTVG…RSVLSWNVNS (93 aa)) constitute a mitochondrion transit peptide.

It belongs to the NDUFAF3 family. Together with NdufAF4 associates with mitochondrial complex I assembly intermediates during its biogenesis.

Its subcellular location is the mitochondrion. Involved in the assembly of mitochondrial NADH:ubiquinone oxidoreductase complex (complex I). Together with NdufAF4, involved in biogenesis of complex 1 modules N, Q and P-peripheral, but not the P-distal module. Required for recruitment of the complex I assembly factor Timmdc1 to complex 1 assembly intermediates. The protein is NADH dehydrogenase [ubiquinone] 1 alpha subcomplex assembly factor 3 of Drosophila melanogaster (Fruit fly).